The primary structure comprises 341 residues: L-threonine 3-dehydrogenase (341 aa).

A Zn(2+)-binding site is contributed by cysteine 38. Residues threonine 40 and histidine 43 each act as charge relay system in the active site. The Zn(2+) site is built by histidine 63, glutamate 64, cysteine 93, cysteine 96, cysteine 99, and cysteine 107. NAD(+) contacts are provided by residues isoleucine 175, aspartate 195, arginine 200, 262-264 (LGI), and 286-287 (IY).

The protein belongs to the zinc-containing alcohol dehydrogenase family. Homotetramer. Requires Zn(2+) as cofactor.

Its subcellular location is the cytoplasm. It carries out the reaction L-threonine + NAD(+) = (2S)-2-amino-3-oxobutanoate + NADH + H(+). Its pathway is amino-acid degradation; L-threonine degradation via oxydo-reductase pathway; glycine from L-threonine: step 1/2. In terms of biological role, catalyzes the NAD(+)-dependent oxidation of L-threonine to 2-amino-3-ketobutyrate. This chain is L-threonine 3-dehydrogenase, found in Cronobacter sakazakii (strain ATCC BAA-894) (Enterobacter sakazakii).